The sequence spans 936 residues: Protein translocase subunit SecA (936 aa).

ATP contacts are provided by residues Q87, 105–109, and D515; that span reads GEGKT. C920, C922, C931, and H932 together coordinate Zn(2+).

It belongs to the SecA family. As to quaternary structure, monomer and homodimer. Part of the essential Sec protein translocation apparatus which comprises SecA, SecYEG and auxiliary proteins SecDF-YajC and YidC. Zn(2+) serves as cofactor.

The protein resides in the cell inner membrane. It is found in the cytoplasm. It catalyses the reaction ATP + H2O + cellular proteinSide 1 = ADP + phosphate + cellular proteinSide 2.. In terms of biological role, part of the Sec protein translocase complex. Interacts with the SecYEG preprotein conducting channel. Has a central role in coupling the hydrolysis of ATP to the transfer of proteins into and across the cell membrane, serving both as a receptor for the preprotein-SecB complex and as an ATP-driven molecular motor driving the stepwise translocation of polypeptide chains across the membrane. This is Protein translocase subunit SecA from Paraburkholderia xenovorans (strain LB400).